The sequence spans 523 residues: Light-independent protochlorophyllide reductase subunit B (523 aa).

Residue D36 participates in [4Fe-4S] cluster binding. The active-site Proton donor is D290. 425–426 (GL) lines the substrate pocket.

Belongs to the ChlB/BchB/BchZ family. Protochlorophyllide reductase is composed of three subunits; ChlL, ChlN and ChlB. Forms a heterotetramer of two ChlB and two ChlN subunits. [4Fe-4S] cluster is required as a cofactor.

It catalyses the reaction chlorophyllide a + oxidized 2[4Fe-4S]-[ferredoxin] + 2 ADP + 2 phosphate = protochlorophyllide a + reduced 2[4Fe-4S]-[ferredoxin] + 2 ATP + 2 H2O. Its pathway is porphyrin-containing compound metabolism; chlorophyll biosynthesis (light-independent). In terms of biological role, component of the dark-operative protochlorophyllide reductase (DPOR) that uses Mg-ATP and reduced ferredoxin to reduce ring D of protochlorophyllide (Pchlide) to form chlorophyllide a (Chlide). This reaction is light-independent. The NB-protein (ChlN-ChlB) is the catalytic component of the complex. The protein is Light-independent protochlorophyllide reductase subunit B of Prochlorococcus marinus (strain MIT 9301).